The following is a 511-amino-acid chain: Maturase K (511 aa).

This sequence belongs to the intron maturase 2 family. MatK subfamily.

The protein resides in the plastid. It is found in the chloroplast. Functionally, usually encoded in the trnK tRNA gene intron. Probably assists in splicing its own and other chloroplast group II introns. The polypeptide is Maturase K (Hordeum vulgare subsp. spontaneum (Wild barley)).